We begin with the raw amino-acid sequence, 238 residues long: Sugar fermentation stimulation protein homolog (238 aa).

Belongs to the SfsA family.

This Pseudoalteromonas translucida (strain TAC 125) protein is Sugar fermentation stimulation protein homolog.